A 513-amino-acid polypeptide reads, in one-letter code: Cobyric acid synthase (513 aa).

Residues 270 to 470 (RLRIAIVAYP…THGLFESPAV (201 aa)) form the GATase cobBQ-type domain. Residue C351 is the Nucleophile of the active site. The active site involves H462.

Belongs to the CobB/CobQ family. CobQ subfamily.

The protein operates within cofactor biosynthesis; adenosylcobalamin biosynthesis. Its function is as follows. Catalyzes amidations at positions B, D, E, and G on adenosylcobyrinic A,C-diamide. NH(2) groups are provided by glutamine, and one molecule of ATP is hydrogenolyzed for each amidation. This Leptothrix cholodnii (strain ATCC 51168 / LMG 8142 / SP-6) (Leptothrix discophora (strain SP-6)) protein is Cobyric acid synthase.